A 341-amino-acid polypeptide reads, in one-letter code: NADH-quinone oxidoreductase subunit H 1 (341 aa).

Helical transmembrane passes span 13–33, 82–102, 115–135, 161–181, 190–210, 248–268, 277–297, and 313–333; these read LVVIGQSVLLLVILLIAIAYI, GLFLLAPLVTCVLALAAWAVI, VGVLYILAVSSLSVYGIIMAG, IGFVVICVLLCVGSLNLTAIV, MLGWYWLPLFPMFVVFYVSAL, YVAIVTMCAMGTILFLGGWLP, WVPGIVWFSLKLLFMFFLFAM, and LGWKVFLPLSLAMVVIVASVL.

This sequence belongs to the complex I subunit 1 family. In terms of assembly, NDH-1 is composed of 14 different subunits. Subunits NuoA, H, J, K, L, M, N constitute the membrane sector of the complex.

It localises to the cell inner membrane. The catalysed reaction is a quinone + NADH + 5 H(+)(in) = a quinol + NAD(+) + 4 H(+)(out). Functionally, NDH-1 shuttles electrons from NADH, via FMN and iron-sulfur (Fe-S) centers, to quinones in the respiratory chain. The immediate electron acceptor for the enzyme in this species is believed to be ubiquinone. Couples the redox reaction to proton translocation (for every two electrons transferred, four hydrogen ions are translocated across the cytoplasmic membrane), and thus conserves the redox energy in a proton gradient. This subunit may bind ubiquinone. This Rhodopseudomonas palustris (strain ATCC BAA-98 / CGA009) protein is NADH-quinone oxidoreductase subunit H 1.